The chain runs to 475 residues: RNA pseudouridine synthase 3, mitochondrial (475 aa).

The N-terminal 15 residues, 1-15 (MLCRRRRVGAAVRWL), are a transit peptide targeting the mitochondrion. Residues 40-74 (RLGKPKPGPRPRQLLSLPPFPGGGDGDPLPGRKAA) form a disordered region. The 71-residue stretch at 90-160 (ADVPQEVVQA…GEIKKRYETI (71 aa)) folds into the S4 RNA-binding domain. Residue aspartate 230 is part of the active site.

Belongs to the pseudouridine synthase RluA family.

It is found in the mitochondrion. The enzyme catalyses a uridine in RNA = a pseudouridine in RNA. In Oryza sativa subsp. japonica (Rice), this protein is RNA pseudouridine synthase 3, mitochondrial.